Reading from the N-terminus, the 646-residue chain is Secretogranin-1 (646 aa).

Positions 1-20 are cleaved as a signal peptide; the sequence is MQPAALLGLLGATVVAAVSS. An intrachain disulfide couples Cys-36 to Cys-57. A compositionally biased stretch (basic and acidic residues) spans 67–90; the sequence is ELKNEEKSENENTRFEVRLLRDPA. Residues 67–483 are disordered; it reads ELKNEEKSEN…GKQYAPHHIT (417 aa). Ser-74 is subject to Phosphoserine. Thr-79 and Thr-92 each carry phosphothreonine. A phosphoserine mark is found at Ser-93, Ser-99, Ser-100, and Ser-104. O-linked (Xyl...) (chondroitin sulfate) serine glycosylation occurs at Ser-93. The O-linked (GalNAc...) threonine glycan is linked to Thr-113. Composition is skewed to basic and acidic residues over residues 119–128 and 137–173; these read SGGHSRERAG and KEAK…ERLS. Ser-123, Ser-146, and Ser-168 each carry phosphoserine. Polar residues predominate over residues 182–191; the sequence is AFLNQRNQTP. Thr-190 carries O-linked (GalNAc...) threonine glycosylation. Ser-205 is modified (phosphoserine). A compositionally biased stretch (basic and acidic residues) spans 208 to 228; it reads GLEKSHSRERSSQESGEETKS. A glycan (O-linked (Xyl...) (chondroitin sulfate) serine) is linked at Ser-222. The span at 260–270 shows a compositional bias: basic residues; that stretch reads RHSRPRHHHGR. A phosphoserine mark is found at Ser-276, Ser-277, and Ser-295. At Tyr-315 the chain carries Sulfotyrosine. Basic and acidic residues predominate over residues 340-361; it reads GRGEHQALRRPSEESLEQENKR. Phosphoserine occurs at positions 351 and 354. Tyr-374 bears the Phosphotyrosine mark. Phosphoserine is present on residues Ser-375 and Ser-378. The span at 406-425 shows a compositional bias: basic and acidic residues; it reads TDEKRFLGETHHRVQESQRD. Position 441 is a sulfotyrosine (Tyr-441). Composition is skewed to basic and acidic residues over residues 442-451 and 459-472; these read GEEKGEEAAR and DPRD…EARL. At Gln-476 the chain carries Pyrrolidone carboxylic acid; in secretogranin-1(476-566). Ser-502, Ser-503, and Ser-514 each carry phosphoserine. A Sulfotyrosine modification is found at Tyr-535. Position 567 is a pyrrolidone carboxylic acid; in peptide BAM-1745 (Gln-567). At Ser-584 the chain carries Phosphoserine. Positions 588–620 are disordered; it reads PDFYDSEEQMSPQHTAENEEEKAGQGVLTEEEE. Residue Tyr-591 is modified to Sulfotyrosine. Phosphoserine occurs at positions 593 and 598. Gln-634 carries the pyrrolidone carboxylic acid; in Secretolytin; partial modification.

This sequence belongs to the chromogranin/secretogranin protein family. Interacts with ITPR1 in the secretory granules. In terms of processing, O-glycosylated by the trisaccharide, GalNAc-Gal-NeuAc, on 2 sites in the N-terminal. May be glycated. Post-translationally, extensively phosphorylated. Differentially processed on numerous sites throughout the sequence depending on tissue type.

Its subcellular location is the cytoplasmic vesicle. The protein resides in the secretory vesicle membrane. It localises to the secreted. In terms of biological role, secretogranin-1 is a neuroendocrine secretory granule protein, which may be the precursor for other biologically active peptides. The 16 pairs of basic AA distributed throughout its sequence may be used as proteolytic cleavage sites. Its function is as follows. Secretolytin has antibacterial activity. The protein is Secretogranin-1 (CHGB) of Bos taurus (Bovine).